The following is a 160-amino-acid chain: Lymphocyte antigen 96 (160 aa).

A signal peptide spans 1–16 (MLPFILFSTLLPLIFT). 3 disulfide bridges follow: C25-C51, C37-C148, and C95-C105. Residues N26, N77, and N101 are each glycosylated (N-linked (GlcNAc...) asparagine). An interaction with lipopolysaccharide region spans residues 119–123 (FSFKG). N150 carries an N-linked (GlcNAc...) asparagine glycan.

Heterogeneous homomer formed from homodimers; disulfide-linked. Belongs to the lipopolysaccharide (LPS) receptor, a multi-protein complex containing at least CD14, LY96 and TLR4. Binds to the extracellular domains of TLR2 and TLR4. Ligand binding induces interaction with TLR4 and oligomerization of the complex. N-glycosylated.

The protein localises to the secreted. The protein resides in the extracellular space. Binds bacterial lipopolysaccharide (LPS). Cooperates with TLR4 in the innate immune response to bacterial lipopolysaccharide (LPS), and with TLR2 in the response to cell wall components from Gram-positive and Gram-negative bacteria. Enhances TLR4-dependent activation of NF-kappa-B. Cells expressing both LY96 and TLR4, but not TLR4 alone, respond to LPS. The protein is Lymphocyte antigen 96 (LY96) of Cricetulus griseus (Chinese hamster).